The sequence spans 111 residues: U-scoloptoxin(16)-Er8a (111 aa).

Positions 1–26 (MTSTRKLSVSCLIVFMVSSLIAVSSG) are cleaved as a signal peptide.

The protein belongs to the scoloptoxin-16 family. Contains 4 disulfide bonds. In terms of tissue distribution, expressed by the venom gland.

The protein resides in the secreted. In Ethmostigmus rubripes (Giant centipede), this protein is U-scoloptoxin(16)-Er8a.